A 320-amino-acid chain; its full sequence is ATP-dependent 6-phosphofructokinase (320 aa).

G12 is a binding site for ATP. ADP contacts are provided by residues 22 to 26 and 55 to 60; these read RGVVR and RYSVSD. ATP contacts are provided by residues 73–74 and 103–106; these read RF and GDGS. D104 lines the Mg(2+) pocket. 126–128 is a substrate binding site; that stretch reads TID. D128 functions as the Proton acceptor in the catalytic mechanism. R155 is a binding site for ADP. Residues R163 and 170-172 contribute to the substrate site; that span reads MGR. Residues 186–188, K212, and 214–216 each bind ADP; these read GCE and KKH. Substrate is bound by residues E223, R244, and 250–253; that span reads HIQR.

Belongs to the phosphofructokinase type A (PFKA) family. ATP-dependent PFK group I subfamily. Prokaryotic clade 'B1' sub-subfamily. In terms of assembly, homotetramer. Mg(2+) is required as a cofactor.

It is found in the cytoplasm. The catalysed reaction is beta-D-fructose 6-phosphate + ATP = beta-D-fructose 1,6-bisphosphate + ADP + H(+). It participates in carbohydrate degradation; glycolysis; D-glyceraldehyde 3-phosphate and glycerone phosphate from D-glucose: step 3/4. With respect to regulation, allosterically activated by ADP and other diphosphonucleosides, and allosterically inhibited by phosphoenolpyruvate. Functionally, catalyzes the phosphorylation of D-fructose 6-phosphate to fructose 1,6-bisphosphate by ATP, the first committing step of glycolysis. This Buchnera aphidicola subsp. Baizongia pistaciae (strain Bp) protein is ATP-dependent 6-phosphofructokinase.